A 356-amino-acid polypeptide reads, in one-letter code: Histidinol-phosphate aminotransferase (356 aa).

At K214 the chain carries N6-(pyridoxal phosphate)lysine.

It belongs to the class-II pyridoxal-phosphate-dependent aminotransferase family. Histidinol-phosphate aminotransferase subfamily. As to quaternary structure, homodimer. The cofactor is pyridoxal 5'-phosphate.

It catalyses the reaction L-histidinol phosphate + 2-oxoglutarate = 3-(imidazol-4-yl)-2-oxopropyl phosphate + L-glutamate. It functions in the pathway amino-acid biosynthesis; L-histidine biosynthesis; L-histidine from 5-phospho-alpha-D-ribose 1-diphosphate: step 7/9. The polypeptide is Histidinol-phosphate aminotransferase (Escherichia coli O6:K15:H31 (strain 536 / UPEC)).